Here is a 441-residue protein sequence, read N- to C-terminus: DNA double-strand break repair protein Mre11 (441 aa).

Mn(2+)-binding residues include D9, H11, D50, and N85. H86 (proton donor) is an active-site residue. H150, D181, and H183 together coordinate Mn(2+). The disordered stretch occupies residues E360–A441. Acidic residues-rich tracts occupy residues A379–A403 and T411–T425.

The protein belongs to the MRE11/RAD32 family. As to quaternary structure, homodimer. Forms a heterotetramer composed of two Mre11 subunits and two Rad50 subunits. It depends on Mn(2+) as a cofactor.

Its activity is regulated as follows. Nuclease activity is regulated by Rad50. Functionally, part of the Rad50/Mre11 complex, which is involved in the early steps of DNA double-strand break (DSB) repair. Mre11 binds to DSB ends and has both double-stranded 3'-5' exonuclease activity and single-stranded endonuclease activity. In polyploid organisms, the Rad50/Mre11 complex appears to restrain the repair of double-strand breaks by homologous recombination, allowing another pathway to act as the primary mode of repair. The chain is DNA double-strand break repair protein Mre11 from Haloferax volcanii (strain ATCC 29605 / DSM 3757 / JCM 8879 / NBRC 14742 / NCIMB 2012 / VKM B-1768 / DS2) (Halobacterium volcanii).